The chain runs to 396 residues: 1-deoxy-D-xylulose 5-phosphate reductoisomerase (396 aa).

NADPH-binding residues include threonine 13, glycine 14, serine 15, isoleucine 16, and asparagine 127. Residue lysine 128 participates in 1-deoxy-D-xylulose 5-phosphate binding. Position 129 (glutamate 129) interacts with NADPH. Aspartate 153 is a Mn(2+) binding site. 4 residues coordinate 1-deoxy-D-xylulose 5-phosphate: serine 154, glutamate 155, serine 184, and histidine 207. A Mn(2+)-binding site is contributed by glutamate 155. Glycine 213 is a binding site for NADPH. 4 residues coordinate 1-deoxy-D-xylulose 5-phosphate: serine 220, asparagine 225, lysine 226, and glutamate 229. Glutamate 229 is a binding site for Mn(2+).

This sequence belongs to the DXR family. Mg(2+) is required as a cofactor. Requires Mn(2+) as cofactor.

It catalyses the reaction 2-C-methyl-D-erythritol 4-phosphate + NADP(+) = 1-deoxy-D-xylulose 5-phosphate + NADPH + H(+). It participates in isoprenoid biosynthesis; isopentenyl diphosphate biosynthesis via DXP pathway; isopentenyl diphosphate from 1-deoxy-D-xylulose 5-phosphate: step 1/6. In terms of biological role, catalyzes the NADPH-dependent rearrangement and reduction of 1-deoxy-D-xylulose-5-phosphate (DXP) to 2-C-methyl-D-erythritol 4-phosphate (MEP). This Pseudomonas putida (strain W619) protein is 1-deoxy-D-xylulose 5-phosphate reductoisomerase.